The following is a 213-amino-acid chain: Imidazole glycerol phosphate synthase subunit HisH 1 (213 aa).

The Glutamine amidotransferase type-1 domain maps to 3–213 (SVSIVDYGVG…LSIIQQFLQI (211 aa)). The Nucleophile role is filled by C81. Active-site residues include H195 and E197.

In terms of assembly, heterodimer of HisH and HisF.

The protein resides in the cytoplasm. It carries out the reaction 5-[(5-phospho-1-deoxy-D-ribulos-1-ylimino)methylamino]-1-(5-phospho-beta-D-ribosyl)imidazole-4-carboxamide + L-glutamine = D-erythro-1-(imidazol-4-yl)glycerol 3-phosphate + 5-amino-1-(5-phospho-beta-D-ribosyl)imidazole-4-carboxamide + L-glutamate + H(+). It catalyses the reaction L-glutamine + H2O = L-glutamate + NH4(+). It functions in the pathway amino-acid biosynthesis; L-histidine biosynthesis; L-histidine from 5-phospho-alpha-D-ribose 1-diphosphate: step 5/9. Functionally, IGPS catalyzes the conversion of PRFAR and glutamine to IGP, AICAR and glutamate. The HisH subunit provides the glutamine amidotransferase activity that produces the ammonia necessary to HisF for the synthesis of IGP and AICAR. The protein is Imidazole glycerol phosphate synthase subunit HisH 1 of Legionella pneumophila (strain Paris).